The primary structure comprises 265 residues: Signal peptidase I (265 aa).

Topologically, residues 1–19 (MQIDTKTNTNKTTAQEWKS) are cytoplasmic. Residues 20–40 (FAFVVCIALLIRILIMEPFTV) traverse the membrane as a helical segment. At 41 to 265 (PTGSMKATIL…IFRNLYNTDE (225 aa)) the chain is on the periplasmic side. Active-site residues include serine 44 and lysine 107.

It belongs to the peptidase S26 family.

The protein localises to the cell inner membrane. The catalysed reaction is Cleavage of hydrophobic, N-terminal signal or leader sequences from secreted and periplasmic proteins.. This chain is Signal peptidase I (lepB), found in Rickettsia canadensis (strain McKiel).